The primary structure comprises 169 residues: Protein HIGH ARSENIC CONTENT 1, mitochondrial (169 aa).

The transit peptide at 1–59 (MYTYSLLNLSHCRRQTRKKRKTDHTEGFLMEETKPKTVEDVETVDVYTAKGFLSTGHRY) directs the protein to the mitochondrion. The Rhodanese domain maps to 60 to 153 (LDVRTNEEFA…WVDAGFAGDK (94 aa)). The Cysteine persulfide intermediate role is filled by cysteine 113.

Expressed in root hairs, epidermal cells at the surface of the root and in the pericycle within the stele.

The protein localises to the mitochondrion. It carries out the reaction [glutaredoxin]-dithiol + arsenate + glutathione + H(+) = glutathionyl-S-S-[glutaredoxin] + arsenite + H2O. Inhibited by trobenzenesulphonic acid (TNBS). Functionally, arsenate reductase critical for arsenic tolerance. Reduces arsenate to arsenite in the root, facilitating efflux of arsenic back into the soil to limit both its accumulation in the root and transport to the shoot. Essential for arsenite efflux from the root, but not necessary for arsenate uptake. This Arabidopsis thaliana (Mouse-ear cress) protein is Protein HIGH ARSENIC CONTENT 1, mitochondrial.